A 631-amino-acid chain; its full sequence is Phosphomethylpyrimidine synthase (631 aa).

Substrate is bound by residues N239, M268, Y297, H333, S353–G355, D394–R397, and E433. H437 provides a ligand contact to Zn(2+). Y460 is a substrate binding site. H501 is a binding site for Zn(2+). [4Fe-4S] cluster-binding residues include C581, C584, and C589.

The protein belongs to the ThiC family. As to quaternary structure, homodimer. It depends on [4Fe-4S] cluster as a cofactor.

The enzyme catalyses 5-amino-1-(5-phospho-beta-D-ribosyl)imidazole + S-adenosyl-L-methionine = 4-amino-2-methyl-5-(phosphooxymethyl)pyrimidine + CO + 5'-deoxyadenosine + formate + L-methionine + 3 H(+). It participates in cofactor biosynthesis; thiamine diphosphate biosynthesis. Functionally, catalyzes the synthesis of the hydroxymethylpyrimidine phosphate (HMP-P) moiety of thiamine from aminoimidazole ribotide (AIR) in a radical S-adenosyl-L-methionine (SAM)-dependent reaction. The chain is Phosphomethylpyrimidine synthase from Escherichia coli O139:H28 (strain E24377A / ETEC).